Reading from the N-terminus, the 352-residue chain is Protein RecA (352 aa).

67-74 (GPESSGKT) is an ATP binding site.

Belongs to the RecA family.

It localises to the cytoplasm. Functionally, can catalyze the hydrolysis of ATP in the presence of single-stranded DNA, the ATP-dependent uptake of single-stranded DNA by duplex DNA, and the ATP-dependent hybridization of homologous single-stranded DNAs. It interacts with LexA causing its activation and leading to its autocatalytic cleavage. This Chlamydia trachomatis serovar D (strain ATCC VR-885 / DSM 19411 / UW-3/Cx) protein is Protein RecA.